The following is a 240-amino-acid chain: Uridylate kinase (240 aa).

12–15 is an ATP binding site; it reads KLSG. An involved in allosteric activation by GTP region spans residues 20 to 25; that stretch reads GEQGNG. Gly-54 lines the UMP pocket. Residues Gly-55 and Arg-59 each coordinate ATP. UMP is bound by residues Asp-74 and 135–142; that span reads TGNPYFST. 3 residues coordinate ATP: Asn-163, Tyr-169, and Asp-172.

Belongs to the UMP kinase family. In terms of assembly, homohexamer.

Its subcellular location is the cytoplasm. It catalyses the reaction UMP + ATP = UDP + ADP. The protein operates within pyrimidine metabolism; CTP biosynthesis via de novo pathway; UDP from UMP (UMPK route): step 1/1. Allosterically activated by GTP. Inhibited by UTP. Functionally, catalyzes the reversible phosphorylation of UMP to UDP. This chain is Uridylate kinase, found in Bacillus velezensis (strain DSM 23117 / BGSC 10A6 / LMG 26770 / FZB42) (Bacillus amyloliquefaciens subsp. plantarum).